The chain runs to 371 residues: Peptide chain release factor 2 (371 aa).

Gln-250 carries the post-translational modification N5-methylglutamine.

It belongs to the prokaryotic/mitochondrial release factor family. In terms of processing, methylated by PrmC. Methylation increases the termination efficiency of RF2.

Its subcellular location is the cytoplasm. Peptide chain release factor 2 directs the termination of translation in response to the peptide chain termination codons UGA and UAA. The chain is Peptide chain release factor 2 from Paramagnetospirillum magneticum (strain ATCC 700264 / AMB-1) (Magnetospirillum magneticum).